A 149-amino-acid chain; its full sequence is Transcription factor Atoh7 (149 aa).

In terms of domain architecture, bHLH spans 41 to 93 (RRRLAANARERRRMQGLNTAFDRLRRVVPQWGQDKKLSKYETLQMALSYIIAL).

As to quaternary structure, forms a heterodimer with TCF3 isoform E47; interaction may be required for DNA-binding in certain situations. In terms of tissue distribution, expressed in retinal ganglion cells. Expressed in the cerebellum, trapezoid body, ventral nucleus of the lateral lamniscus and in areas of the auditory hindbrain such as the cochlear nucleus, lateral superior olive and medial nucleus of the trapezoid body. Expressed in the modiolar nerve root and in the cochlear in a small group of bushy neurons within the acoustic nerve. Expressed weakly in the sensory epithelia of the saccule and utricle.

The protein resides in the nucleus. It localises to the perikaryon. It is found in the cell projection. The protein localises to the axon. Its function is as follows. Transcription factor that binds to DNA at the consensus sequence 5'-CAG[GC]TG-3'. Dimerization with TCF3 isoform E47 may be required in certain situations. Binds to gene promoters and enhancer elements, and thereby regulates a transcriptional program of retinal ganglion cell (RGC) determinant genes. Although the exact mechanism is not certain, retinal transcription regulation by ATOH7 has a role in RGC determination and survival, photoreceptor population development, targeting of RGC axons to the optic nerve and development of the retino-hypothalamic tract. Binds to its own promoter and enhancer sequences, suggesting autoregulation of ATOH7 transcription. Required for retinal circadian rhythm photoentrainment. Plays a role in brainstem auditory signaling and binaural processing. The chain is Transcription factor Atoh7 from Mus musculus (Mouse).